The primary structure comprises 388 residues: Probable fatty acid desaturase DES1 (388 aa).

The disordered stretch occupies residues 1 to 33 (MATTPMTVVDHEAEEAVAKAREDDKSRQVDAFD). A compositionally biased stretch (basic and acidic residues) spans 9 to 30 (VDHEAEEAVAKAREDDKSRQVD). A run of 2 helical transmembrane segments spans residues 62–82 (LWYVVRDVAAVVALGTAAAAM) and 85–105 (WAVWPVYWAVQGTMFWAFFVL). The short motif at 107-111 (HDCGH) is the Histidine box-1 element. A helical membrane pass occupies residues 119–139 (TLNSVVGHLLHSFILIPYHGW). Residues 143–147 (HRTHH) carry the Histidine box-2 motif. 3 helical membrane-spanning segments follow: residues 177-194 (IRFTAPYPLLLFPLYLFY), 226-246 (WCIMLASLLAMSCAFGPLQVL), and 248-268 (MYGLPYLVFVMWLDLVTYLHH). The Histidine box-3 signature appears at 310-314 (HVIHH).

This sequence belongs to the fatty acid desaturase type 1 family. Highly expressed in root hair cells. Barely detected in panicle, shoot apex, stems and leaves.

The protein resides in the membrane. The protein operates within lipid metabolism; polyunsaturated fatty acid biosynthesis. The protein is Probable fatty acid desaturase DES1 of Sorghum bicolor (Sorghum).